Here is a 341-residue protein sequence, read N- to C-terminus: 3-keto-steroid reductase/17-beta-hydroxysteroid dehydrogenase 7 (341 aa).

Residues 1 to 229 (MRKVVLITGA…VACPGTALTN (229 aa)) lie on the Extracellular side of the membrane. 8–15 (TGASSGIG) is a binding site for NAD(+). N37 carries N-linked (GlcNAc...) asparagine glycosylation. S171 provides a ligand contact to substrate. N178 carries an N-linked (GlcNAc...) asparagine glycan. Y193 functions as the Proton acceptor in the catalytic mechanism. N-linked (GlcNAc...) asparagine glycosylation occurs at N229. Residues 230–250 (LTYGILPPFIWTLLMPAILLL) traverse the membrane as a helical segment. At 251–341 (RFFANAFTLT…NQARLSGSCL (91 aa)) the chain is on the cytoplasmic side.

It belongs to the short-chain dehydrogenases/reductases (SDR) family. ERG27 subfamily. Binds to the short form of prolactin receptor. Post-translationally, phosphorylated. Highly expressed in adrenal gland, liver, lung and thymus. Expressed in breast, ovaries, pituitary gland, pregnant uterus, prostate, kidney, lymph node, small intestine, spinal cord and trachea. Weakly expressed in all other tissues tested. As to expression, expressed in eye ciliary epithelial cells and neuroendocrine cells.

It localises to the endoplasmic reticulum membrane. The enzyme catalyses 17beta-estradiol + NADP(+) = estrone + NADPH + H(+). It carries out the reaction a 3beta-hydroxysteroid + NADP(+) = a 3-oxosteroid + NADPH + H(+). It catalyses the reaction 3-dehydro-4alpha-methylzymosterol + NADPH + H(+) = 4alpha-methylzymosterol + NADP(+). The catalysed reaction is zymosterone + NADPH + H(+) = zymosterol + NADP(+). The enzyme catalyses 4alpha-methyl-5alpha-cholest-8-en-3-one + NADPH + H(+) = 4alpha-methyl-5alpha-cholest-8-en-3beta-ol + NADP(+). It carries out the reaction 4alpha-methyl-5alpha-cholest-7-en-3beta-ol + NADP(+) = 4alpha-methyl-5alpha-cholest-7-en-3-one + NADPH + H(+). It catalyses the reaction 5alpha-cholest-8-en-3-one + NADPH + H(+) = 5alpha-cholest-8-en-3beta-ol + NADP(+). The catalysed reaction is 5alpha-androstane-3beta,17beta-diol + NADP(+) = 17beta-hydroxy-5alpha-androstan-3-one + NADPH + H(+). The enzyme catalyses progesterone + NADPH + H(+) = 3beta-hydroxypregn-4-ene-20-one + NADP(+). It participates in steroid biosynthesis; estrogen biosynthesis. It functions in the pathway steroid biosynthesis; zymosterol biosynthesis; zymosterol from lanosterol: step 5/6. Its activity is regulated as follows. Estradiol 17-beta-dehydrogenase and dihydrotestosterone oxidoreductase activities are selectively inhibited by 4-methyl-4-aza-5alpha-androstane derivatives, such as 17beta-[(N-Heptyl)methylamino]-4-aza-5r-androstan-3-one and 17beta-(N-Decylformamido)-4-aza-5r-androstan-3-one. Its function is as follows. Bifunctional enzyme involved in steroid-hormone metabolism and cholesterol biosynthesis. Catalyzes the NADP(H)-dependent reduction of estrogens and androgens and regulates the biological potency of these steroids. Converts estrone (E1) to a more potent estrogen, 17beta-estradiol (E2). Converts dihydrotestosterone (DHT) to its inactive form 5a-androstane-3b,17b-diol. Converts moderately progesterone to 3beta-hydroxypregn-4-ene-20-one, leading to its inactivation. Additionally, participates in the post-squalene cholesterol biosynthesis, as a 3-ketosteroid reductase. Does not have enzymatic activities toward E1 and DHT. The polypeptide is 3-keto-steroid reductase/17-beta-hydroxysteroid dehydrogenase 7 (HSD17B7) (Homo sapiens (Human)).